The following is a 585-amino-acid chain: Mitochondrial translation ATP-dependent RNA helicase mrh5 (585 aa).

Positions 87 to 117 (PKFHELPLNQNILDGLSTNFAEYKNSTPLQQ) match the Q motif motif. Residues 121–351 (NALMKSGVSF…SRYITDQLGI (231 aa)) form the Helicase ATP-binding domain. 134-141 (GWNGSGKS) is a binding site for ATP. The DEAD box motif lies at 261–264 (DESD). Residues 390 to 584 (NLPYEFVRFN…PKSYEFDDEH (195 aa)) form the Helicase C-terminal domain.

This sequence belongs to the DEAD box helicase family. As to quaternary structure, component of the MRH5C complex, composed of mrh5, ppr4, mtf2, and sls1. Proteins mtf2 and sls1 form a subcomplex that serves as a scaffold to bring mrh5 and ppr4 together. The MRH5C complex associates with the small subunit of the mitochondrial ribosome.

It is found in the mitochondrion. It catalyses the reaction ATP + H2O = ADP + phosphate + H(+). Translation activation factor that as part of the MRH5C complex specifically recruits cox1 mRNA to the mitochondrial ribosome for translation initiation. This is Mitochondrial translation ATP-dependent RNA helicase mrh5 from Schizosaccharomyces pombe (strain 972 / ATCC 24843) (Fission yeast).